Reading from the N-terminus, the 388-residue chain is Succinate--CoA ligase [ADP-forming] subunit beta (388 aa).

The 237-residue stretch at 9–245 (KELLAGYGLP…KSQENERELK (237 aa)) folds into the ATP-grasp domain. Residues K46, 53–55 (GRG), E100, Y103, and E108 contribute to the ATP site. N200 and D214 together coordinate Mg(2+). Residues N265 and 322–324 (GIV) each bind substrate.

It belongs to the succinate/malate CoA ligase beta subunit family. Heterotetramer of two alpha and two beta subunits. It depends on Mg(2+) as a cofactor.

The enzyme catalyses succinate + ATP + CoA = succinyl-CoA + ADP + phosphate. The catalysed reaction is GTP + succinate + CoA = succinyl-CoA + GDP + phosphate. It functions in the pathway carbohydrate metabolism; tricarboxylic acid cycle; succinate from succinyl-CoA (ligase route): step 1/1. Its function is as follows. Succinyl-CoA synthetase functions in the citric acid cycle (TCA), coupling the hydrolysis of succinyl-CoA to the synthesis of either ATP or GTP and thus represents the only step of substrate-level phosphorylation in the TCA. The beta subunit provides nucleotide specificity of the enzyme and binds the substrate succinate, while the binding sites for coenzyme A and phosphate are found in the alpha subunit. The protein is Succinate--CoA ligase [ADP-forming] subunit beta of Neisseria meningitidis serogroup C (strain 053442).